Here is a 490-residue protein sequence, read N- to C-terminus: Phosphoglucosamine mutase (490 aa).

Catalysis depends on S139, which acts as the Phosphoserine intermediate. The Mg(2+) site is built by S139, D279, D281, and D283. S139 carries the post-translational modification Phosphoserine.

The protein belongs to the phosphohexose mutase family. It depends on Mg(2+) as a cofactor. In terms of processing, activated by phosphorylation.

It catalyses the reaction alpha-D-glucosamine 1-phosphate = D-glucosamine 6-phosphate. Catalyzes the conversion of glucosamine-6-phosphate to glucosamine-1-phosphate. This is Phosphoglucosamine mutase from Nostoc sp. (strain PCC 7120 / SAG 25.82 / UTEX 2576).